We begin with the raw amino-acid sequence, 200 residues long: MPINLYSKAVFLKSAARVNQLPEDSGYEVAFAGRSNAGKSSALNCLTNNKNLARTSKTPGRTQLINLFSLDEQRRLVDLPGYGYAKVAMEVKLEWQKNLAHYLEARQCLRGLILLMDVRHPLKDLDQILVNWALHRELPVHILLTKADKLSRSEVKNAVLKVRQYYELAEHLVSVQAFSSVKKDGVEELISVLDRWYEWN.

Residues 25–199 form the EngB-type G domain; the sequence is SGYEVAFAGR…ISVLDRWYEW (175 aa). GTP contacts are provided by residues 33-40, 60-64, 78-81, 145-148, and 178-180; these read GRSNAGKS, GRTQL, DLPG, TKAD, and FSS. Residues serine 40 and threonine 62 each coordinate Mg(2+).

This sequence belongs to the TRAFAC class TrmE-Era-EngA-EngB-Septin-like GTPase superfamily. EngB GTPase family. Requires Mg(2+) as cofactor.

Its function is as follows. Necessary for normal cell division and for the maintenance of normal septation. The polypeptide is Probable GTP-binding protein EngB (Legionella pneumophila (strain Paris)).